Here is a 237-residue protein sequence, read N- to C-terminus: Phosphoribosylaminoimidazole-succinocarboxamide synthase (237 aa).

The protein belongs to the SAICAR synthetase family.

The enzyme catalyses 5-amino-1-(5-phospho-D-ribosyl)imidazole-4-carboxylate + L-aspartate + ATP = (2S)-2-[5-amino-1-(5-phospho-beta-D-ribosyl)imidazole-4-carboxamido]succinate + ADP + phosphate + 2 H(+). It functions in the pathway purine metabolism; IMP biosynthesis via de novo pathway; 5-amino-1-(5-phospho-D-ribosyl)imidazole-4-carboxamide from 5-amino-1-(5-phospho-D-ribosyl)imidazole-4-carboxylate: step 1/2. In Halalkalibacterium halodurans (strain ATCC BAA-125 / DSM 18197 / FERM 7344 / JCM 9153 / C-125) (Bacillus halodurans), this protein is Phosphoribosylaminoimidazole-succinocarboxamide synthase.